We begin with the raw amino-acid sequence, 710 residues long: Probable thimet oligopeptidase (710 aa).

Zn(2+) is bound at residue histidine 502. The active site involves glutamate 503. Histidine 506 contributes to the Zn(2+) binding site.

This sequence belongs to the peptidase M3 family. Requires Zn(2+) as cofactor.

It is found in the cytoplasm. It catalyses the reaction Preferential cleavage of bonds with hydrophobic residues at P1, P2 and P3' and a small residue at P1' in substrates of 5 to 15 residues.. Involved in cytoplasmic peptide degradation. The sequence is that of Probable thimet oligopeptidase from Arabidopsis thaliana (Mouse-ear cress).